Here is a 363-residue protein sequence, read N- to C-terminus: tRNA/tmRNA (uracil-C(5))-methyltransferase (363 aa).

S-adenosyl-L-methionine contacts are provided by glutamine 187, tyrosine 215, asparagine 220, glutamate 236, and aspartate 296. Cysteine 321 functions as the Nucleophile in the catalytic mechanism. Glutamate 355 (proton acceptor) is an active-site residue.

The protein belongs to the class I-like SAM-binding methyltransferase superfamily. RNA M5U methyltransferase family. TrmA subfamily.

It catalyses the reaction uridine(54) in tRNA + S-adenosyl-L-methionine = 5-methyluridine(54) in tRNA + S-adenosyl-L-homocysteine + H(+). The catalysed reaction is uridine(341) in tmRNA + S-adenosyl-L-methionine = 5-methyluridine(341) in tmRNA + S-adenosyl-L-homocysteine + H(+). Its function is as follows. Dual-specificity methyltransferase that catalyzes the formation of 5-methyluridine at position 54 (m5U54) in all tRNAs, and that of position 341 (m5U341) in tmRNA (transfer-mRNA). The chain is tRNA/tmRNA (uracil-C(5))-methyltransferase from Pseudomonas aeruginosa (strain LESB58).